The chain runs to 247 residues: D-alanyl-D-alanine dipeptidase (247 aa).

Zn(2+) is bound by residues His-140 and Asp-147. Glu-215 acts as the Proton donor/acceptor in catalysis. Zn(2+) is bound at residue His-218.

It belongs to the peptidase M15D family. It depends on Zn(2+) as a cofactor.

Its subcellular location is the cytoplasm. It carries out the reaction D-alanyl-D-alanine + H2O = 2 D-alanine. Catalyzes hydrolysis of the D-alanyl-D-alanine dipeptide. May have a role in cell-wall turnover. This is D-alanyl-D-alanine dipeptidase from Synechocystis sp. (strain ATCC 27184 / PCC 6803 / Kazusa).